The sequence spans 350 residues: (S)-tetrahydroprotoberberine N-methyltransferase (350 aa).

S-adenosyl-L-methionine contacts are provided by serine 91, glycine 129, asparagine 153, glutamine 157, aspartate 179, valine 180, and valine 195. Cysteine 325 is an active-site residue.

Belongs to the CFA/CMAS family. As to quaternary structure, homodimer.

The protein localises to the cytoplasm. It carries out the reaction (S)-stylopine + S-adenosyl-L-methionine = (S)-cis-N-methylstylopine + S-adenosyl-L-homocysteine. The catalysed reaction is (S)-tetrahydropalmatine + S-adenosyl-L-methionine = (S)-cis-N-methyltetrahydropalmatine + S-adenosyl-L-homocysteine. The enzyme catalyses (S)-canadine + S-adenosyl-L-methionine = (S)-cis-N-methylcanadine + S-adenosyl-L-homocysteine. It catalyses the reaction (S)-scoulerine + S-adenosyl-L-methionine = (S)-cis-N-methylscoulerine + S-adenosyl-L-homocysteine. It functions in the pathway alkaloid biosynthesis. N-methyltransferase with a broad substrate range, accepting protoberberine alkaloids (R,S)-stylopine, (R,S)-nandinine and (R,S)-tetrahydropalmatine, and to a lesser extent (R,S)-canadine, (R,S)-tetrahydrogroenlandicine (cheilanthifoline) and (S)-scoulerine. In Eschscholzia californica (California poppy), this protein is (S)-tetrahydroprotoberberine N-methyltransferase.